We begin with the raw amino-acid sequence, 97 residues long: Large ribosomal subunit protein bL27 (97 aa).

Positions Met-1–Val-23 are disordered.

Belongs to the bacterial ribosomal protein bL27 family.

This Acidothermus cellulolyticus (strain ATCC 43068 / DSM 8971 / 11B) protein is Large ribosomal subunit protein bL27.